We begin with the raw amino-acid sequence, 229 residues long: GTP cyclohydrolase 1 (229 aa).

The disordered stretch occupies residues Met-1–Asp-26. Zn(2+) contacts are provided by Cys-118, His-121, and Cys-189.

This sequence belongs to the GTP cyclohydrolase I family. In terms of assembly, toroid-shaped homodecamer, composed of two pentamers of five dimers.

The enzyme catalyses GTP + H2O = 7,8-dihydroneopterin 3'-triphosphate + formate + H(+). Its pathway is cofactor biosynthesis; 7,8-dihydroneopterin triphosphate biosynthesis; 7,8-dihydroneopterin triphosphate from GTP: step 1/1. The sequence is that of GTP cyclohydrolase 1 from Rhodopseudomonas palustris (strain BisB5).